The chain runs to 426 residues: MKQLRLEPVVQVRGEINIPGSKSISNRALLLATLAQGTTTLTNLLDSDDIRHMLASLKQLGVNYRLSQNNTVCELDGLGGVISSESAQELFLGNAGTAMRPLCAALTLGQGEFTLTGEPRMEERPIGDLVDALRQLGANVVYLKNDGFPPLTINATGLSGGDVEIAGDLSSQFLTALLMVAPLAKGSVNIHVKGELVSKPYIDITLALMAQFGVTVINHDYARFEIVAGQRYVSPGKVLVEGDASSASYFLAAGAIKGGEVKVTGVGRLSIQGDVKFADVLEKMGADIEWGDDYIIARGSQLTAVDLDMNHIPDAAMTIATAALFAKGTTVIRNIYNWRIKETDRLAAMATELRKVGAEVEEGNDYIKITPPAVINTAEIDTYNDHRMAMCFSMLAFADCGITINDPDCTSKTFPDYFKQFASLQG.

3-phosphoshikimate contacts are provided by Lys-22, Ser-23, and Arg-27. Lys-22 lines the phosphoenolpyruvate pocket. Phosphoenolpyruvate-binding residues include Gly-96 and Arg-124. Ser-170, Ser-171, Gln-172, Ser-198, Asp-314, Asn-337, and Lys-341 together coordinate 3-phosphoshikimate. Gln-172 provides a ligand contact to phosphoenolpyruvate. Residue Asp-314 is the Proton acceptor of the active site. Phosphoenolpyruvate-binding residues include Arg-345, Arg-387, and Lys-412.

The protein belongs to the EPSP synthase family. Monomer.

It is found in the cytoplasm. It carries out the reaction 3-phosphoshikimate + phosphoenolpyruvate = 5-O-(1-carboxyvinyl)-3-phosphoshikimate + phosphate. The protein operates within metabolic intermediate biosynthesis; chorismate biosynthesis; chorismate from D-erythrose 4-phosphate and phosphoenolpyruvate: step 6/7. Its function is as follows. Catalyzes the transfer of the enolpyruvyl moiety of phosphoenolpyruvate (PEP) to the 5-hydroxyl of shikimate-3-phosphate (S3P) to produce enolpyruvyl shikimate-3-phosphate and inorganic phosphate. This chain is 3-phosphoshikimate 1-carboxyvinyltransferase, found in Shewanella baltica (strain OS155 / ATCC BAA-1091).